Consider the following 320-residue polypeptide: ATP-dependent 6-phosphofructokinase (320 aa).

ATP is bound at residue G12. ADP contacts are provided by residues 22–26 and 55–60; these read RGVVR and RYSVSD. ATP contacts are provided by residues 73 to 74 and 103 to 106; these read RF and GDGS. D104 is a Mg(2+) binding site. 126 to 128 is a binding site for substrate; sequence TID. Residue D128 is the Proton acceptor of the active site. R155 contributes to the ADP binding site. Substrate-binding positions include R163 and 170 to 172; that span reads MGR. Residues 186 to 188, K212, and 214 to 216 contribute to the ADP site; these read GCE and KKH. Residues E223, R244, and 250–253 each bind substrate; that span reads HIQR.

It belongs to the phosphofructokinase type A (PFKA) family. ATP-dependent PFK group I subfamily. Prokaryotic clade 'B1' sub-subfamily. Homotetramer. The cofactor is Mg(2+).

The protein localises to the cytoplasm. The enzyme catalyses beta-D-fructose 6-phosphate + ATP = beta-D-fructose 1,6-bisphosphate + ADP + H(+). It functions in the pathway carbohydrate degradation; glycolysis; D-glyceraldehyde 3-phosphate and glycerone phosphate from D-glucose: step 3/4. Allosterically activated by ADP and other diphosphonucleosides, and allosterically inhibited by phosphoenolpyruvate. In terms of biological role, catalyzes the phosphorylation of D-fructose 6-phosphate to fructose 1,6-bisphosphate by ATP, the first committing step of glycolysis. This Cronobacter sakazakii (strain ATCC BAA-894) (Enterobacter sakazakii) protein is ATP-dependent 6-phosphofructokinase.